We begin with the raw amino-acid sequence, 150 residues long: U1 small nuclear ribonucleoprotein C (150 aa).

The segment at Y4–D36 adopts a Matrin-type zinc-finger fold. The segment at S66–Y132 is disordered. The segment covering D80–K92 has biased composition (basic and acidic residues). The segment covering N103–M112 has biased composition (acidic residues). The span at L115 to A130 shows a compositional bias: pro residues.

It belongs to the U1 small nuclear ribonucleoprotein C family. U1 snRNP is composed of the 7 core Sm proteins B/B', D1, D2, D3, E, F and G that assemble in a heptameric protein ring on the Sm site of the small nuclear RNA to form the core snRNP, and at least 3 U1 snRNP-specific proteins U1-70K, U1-A and U1-C. U1-C interacts with U1 snRNA and the 5' splice-site region of the pre-mRNA.

The protein resides in the nucleus. Component of the spliceosomal U1 snRNP, which is essential for recognition of the pre-mRNA 5' splice-site and the subsequent assembly of the spliceosome. U1-C is directly involved in initial 5' splice-site recognition for both constitutive and regulated alternative splicing. The interaction with the 5' splice-site seems to precede base-pairing between the pre-mRNA and the U1 snRNA. Stimulates commitment or early (E) complex formation by stabilizing the base pairing of the 5' end of the U1 snRNA and the 5' splice-site region. The polypeptide is U1 small nuclear ribonucleoprotein C (Candida albicans (strain SC5314 / ATCC MYA-2876) (Yeast)).